Here is a 341-residue protein sequence, read N- to C-terminus: MKILEFDDKKGIMKLHIENEDDLWILHIILKKGDRVVAKTTRDVSMGRESRRIPMIIKLQVEYTEFQSFTSRLRIHGIILDAPERFGIKGSHHTINLDIGDEIVIEKDHWNKFEIEKIKRQEEKHLKMLIVLVDFDEYLIALPMKQGIRILAEKSLRTPNKEEENIIEDNAKEVANEVLSYAESLGIEVVLLAGPGPFKEIVSNFLKNIKLYVDSVSSATRSGLNEILKRDIIDQISRDYEISEETKIMEKIMENLAKNTGLVAYGKEEVKKSAEYGAVDKLLVIEDLLSSDEEERMEIEKIMEEVENKNGRVLIVPKDSPIYYEVRNLTGLIALLRFRIN.

It belongs to the eukaryotic release factor 1 family. Pelota subfamily. As to quaternary structure, monomer. Requires a divalent metal cation as cofactor.

The protein localises to the cytoplasm. May function in recognizing stalled ribosomes, interact with stem-loop structures in stalled mRNA molecules, and effect endonucleolytic cleavage of the mRNA. May play a role in the release non-functional ribosomes and degradation of damaged mRNAs. Has endoribonuclease activity. The polypeptide is Protein pelota homolog (Sulfurisphaera tokodaii (strain DSM 16993 / JCM 10545 / NBRC 100140 / 7) (Sulfolobus tokodaii)).